The chain runs to 269 residues: Zinc import ATP-binding protein ZnuC (269 aa).

Residues 6 to 221 (VRLTQVGVSF…PAFVELFGQD (216 aa)) enclose the ABC transporter domain. 38–45 (GPNGAGKT) is an ATP binding site.

Belongs to the ABC transporter superfamily. Zinc importer (TC 3.A.1.15.5) family. The complex is composed of two ATP-binding proteins (ZnuC), two transmembrane proteins (ZnuB) and a solute-binding protein (ZnuA).

The protein resides in the cell inner membrane. The enzyme catalyses Zn(2+)(out) + ATP(in) + H2O(in) = Zn(2+)(in) + ADP(in) + phosphate(in) + H(+)(in). In terms of biological role, part of the ABC transporter complex ZnuABC involved in zinc import. Responsible for energy coupling to the transport system. This chain is Zinc import ATP-binding protein ZnuC, found in Pseudomonas aeruginosa (strain UCBPP-PA14).